The chain runs to 250 residues: Ubiquinone/menaquinone biosynthesis C-methyltransferase UbiE (250 aa).

S-adenosyl-L-methionine contacts are provided by residues serine 73, aspartate 94, and 122-123 (NA).

The protein belongs to the class I-like SAM-binding methyltransferase superfamily. MenG/UbiE family.

The catalysed reaction is a 2-demethylmenaquinol + S-adenosyl-L-methionine = a menaquinol + S-adenosyl-L-homocysteine + H(+). It carries out the reaction a 2-methoxy-6-(all-trans-polyprenyl)benzene-1,4-diol + S-adenosyl-L-methionine = a 5-methoxy-2-methyl-3-(all-trans-polyprenyl)benzene-1,4-diol + S-adenosyl-L-homocysteine + H(+). The protein operates within quinol/quinone metabolism; menaquinone biosynthesis; menaquinol from 1,4-dihydroxy-2-naphthoate: step 2/2. It functions in the pathway cofactor biosynthesis; ubiquinone biosynthesis. Functionally, methyltransferase required for the conversion of demethylmenaquinol (DMKH2) to menaquinol (MKH2) and the conversion of 2-polyprenyl-6-methoxy-1,4-benzoquinol (DDMQH2) to 2-polyprenyl-3-methyl-6-methoxy-1,4-benzoquinol (DMQH2). The sequence is that of Ubiquinone/menaquinone biosynthesis C-methyltransferase UbiE from Legionella pneumophila subsp. pneumophila (strain Philadelphia 1 / ATCC 33152 / DSM 7513).